A 109-amino-acid chain; its full sequence is Parvalbumin alpha (109 aa).

EF-hand domains follow at residues 38–73 (KSKEIMQKVFHVLDQDQSGFIEKEELCLILKGFTPE) and 77–109 (LSDKETTALLAAGDKDGDGKIGVDEFVTLVSES). Ca(2+) contacts are provided by Asp-51, Asp-53, Ser-55, Phe-57, Glu-59, Glu-62, Asp-90, Asp-92, Asp-94, Lys-96, and Glu-101.

This sequence belongs to the parvalbumin family.

Its function is as follows. In muscle, parvalbumin is thought to be involved in relaxation after contraction. It binds two calcium ions. The chain is Parvalbumin alpha from Pelophylax lessonae (Pool frog).